The sequence spans 571 residues: Methionine--tRNA ligase (571 aa).

The 'HIGH' region motif lies at 10–20 (PYVNAVPHLGN). Residues C143, C146, C156, and C159 each contribute to the Zn(2+) site. A 'KMSKS' region motif is present at residues 333 to 337 (KFSKS). Residue K336 participates in ATP binding.

The protein belongs to the class-I aminoacyl-tRNA synthetase family. MetG type 1 subfamily. Requires Zn(2+) as cofactor.

The protein resides in the cytoplasm. It carries out the reaction tRNA(Met) + L-methionine + ATP = L-methionyl-tRNA(Met) + AMP + diphosphate. Its function is as follows. Is required not only for elongation of protein synthesis but also for the initiation of all mRNA translation through initiator tRNA(fMet) aminoacylation. The protein is Methionine--tRNA ligase of Sulfurisphaera tokodaii (strain DSM 16993 / JCM 10545 / NBRC 100140 / 7) (Sulfolobus tokodaii).